A 207-amino-acid polypeptide reads, in one-letter code: Putative tributyltin chloride resistance protein (207 aa).

Residues 37–122 (NLPIELALMP…YHAIAALNLG (86 aa)) form a slt-type domain region. The active site involves Glu-49.

Belongs to the transglycosylase Slt family.

The polypeptide is Putative tributyltin chloride resistance protein (tbtA) (Alteromonas sp. (strain M-1)).